A 166-amino-acid polypeptide reads, in one-letter code: Early E3 18.5 kDa glycoprotein (166 aa).

The first 19 residues, 1–19 (MGPILVLLVLLSLLEPGSA), serve as a signal peptide directing secretion. At 20-131 (NYDPCLDFDP…SKDNIVTFSI (112 aa)) the chain is on the lumenal side. Asn31 is a glycosylation site (N-linked (GlcNAc...) asparagine; by host). 2 disulfides stabilise this stretch: Cys32/Cys50 and Cys44/Cys106. Asn63, Asn67, and Asn97 each carry an N-linked (GlcNAc...) asparagine; by host glycan. Residues 132 to 152 (AYCLCACLLTALLCVCIHLLV) traverse the membrane as a helical segment. Residues 153–166 (TTRIKNANNKEKMP) lie on the Cytoplasmic side of the membrane. The Di-lysine motif signature appears at 162-166 (KEKMP).

Belongs to the adenoviridae E19 family. In terms of processing, both disulfide bonds are absolutely critical for the interaction with MHC antigens. N-glycosylated; high-mannose.

Its subcellular location is the host endoplasmic reticulum membrane. Functionally, binds and retains class I heavy chains in the endoplasmic reticulum during the early period of virus infection, thereby impairing their transport to the cell surface. Also delays the expression of class I alleles that it cannot affect by direct retention. Binds transporters associated with antigen processing (TAP) and acts as a tapasin inhibitor, preventing class I/TAP association. In consequence, infected cells are masked for immune recognition by cytotoxic T-lymphocytes. This Human adenovirus B serotype 11 (strain Slobiski) (HAdV-11) protein is Early E3 18.5 kDa glycoprotein.